The chain runs to 356 residues: 3-isopropylmalate dehydrogenase (356 aa).

Residues Arg-95, Arg-105, Arg-133, and Asp-223 each contribute to the substrate site. Mg(2+) contacts are provided by Asp-223, Asp-247, and Asp-251. 281–293 is a binding site for NAD(+); sequence GSAPDIAGQNKAN.

This sequence belongs to the isocitrate and isopropylmalate dehydrogenases family. LeuB type 1 subfamily. In terms of assembly, homodimer. The cofactor is Mg(2+). Requires Mn(2+) as cofactor.

It localises to the cytoplasm. The enzyme catalyses (2R,3S)-3-isopropylmalate + NAD(+) = 4-methyl-2-oxopentanoate + CO2 + NADH. Its pathway is amino-acid biosynthesis; L-leucine biosynthesis; L-leucine from 3-methyl-2-oxobutanoate: step 3/4. Catalyzes the oxidation of 3-carboxy-2-hydroxy-4-methylpentanoate (3-isopropylmalate) to 3-carboxy-4-methyl-2-oxopentanoate. The product decarboxylates to 4-methyl-2 oxopentanoate. The polypeptide is 3-isopropylmalate dehydrogenase (Neisseria gonorrhoeae (strain ATCC 700825 / FA 1090)).